The chain runs to 622 residues: Probable ATP-dependent RNA helicase DDX41 (622 aa).

A compositionally biased stretch (basic and acidic residues) spans 1 to 15; the sequence is MEESEPERKRARTDE. 2 disordered regions span residues 1–39 and 52–84; these read MEESEPERKRARTDEVPAGGSRSEAEDEDDEDYVPYVPL and QRRRKGAAEEEQQDSGSEPRGDEDDIPLGPQSN. Ser-4 carries the phosphoserine modification. Residue Lys-9 is modified to N6-acetyllysine. A Glycyl lysine isopeptide (Lys-Gly) (interchain with G-Cter in ubiquitin) cross-link involves residue Lys-9. 2 positions are modified to phosphoserine: Ser-21 and Ser-23. Tyr-33 bears the Phosphotyrosine mark. A Glycyl lysine isopeptide (Lys-Gly) (interchain with G-Cter in ubiquitin) cross-link involves residue Lys-115. The Q motif signature appears at 181–209; that stretch reads KSFKEMKFPAAILRGLKKKGIHHPTPIQI. The region spanning 212 to 396 is the Helicase ATP-binding domain; the sequence is IPTILSGRDM…KSALVKPVTI (185 aa). 225–232 contacts ATP; it reads AFTGSGKT. The short motif at 344–347 is the DEAD box element; sequence DEAD. A Helicase C-terminal domain is found at 407-567; the sequence is DVIQEVEYVK…KVPPVLQVLH (161 aa). Tyr-414 is subject to Phosphotyrosine; by BTK. Residues Lys-416 and Lys-442 each participate in a glycyl lysine isopeptide (Lys-Gly) (interchain with G-Cter in SUMO2) cross-link. The CCHC-type zinc-finger motif lies at 580–597; sequence RGCAFCGGLGHRITDCPK.

Belongs to the DEAD box helicase family. DDX41 subfamily. As to quaternary structure, identified in the spliceosome C complex. Interacts with ERCC6. Interacts with FAM50A. Interacts with STING1. Interacts with CGAS. Interacts with several spliceosomes components such as PRP19 or CDC5L. In terms of processing, acetylation at Lys-9 regulates the nuclear/cytoplasmic localization. Phosphorylated by BTK; phosphorylation induces binding to dsDNA and STING1. Post-translationally, 'Lys-48'-linked ubiquitinated and degraded by TRIM21 leading to negative regulation of the innate immune response to intracellular dsDNA.

The protein localises to the nucleus. Its subcellular location is the cytoplasm. The catalysed reaction is ATP + H2O = ADP + phosphate + H(+). Multifunctional protein that participates in many aspects of cellular RNA metabolism. Plays pivotal roles in innate immune sensing and hematopoietic homeostasis. Recognizes foreign or self-nucleic acids generated during microbial infection, thereby initiating anti-pathogen responses. Mechanistically, phosphorylation by BTK allows binding to dsDNA leading to interaction with STING1. Modulates the homeostasis of dsDNA through its ATP-dependent DNA-unwinding activity and ATP-independent strand-annealing activity. In turn, induces STING1-mediated type I interferon and cytokine responses to DNA and DNA viruses. Selectively modulates the transcription of certain immunity-associated genes by regulating their alternative splicing. Binds to RNA (R)-loops, structures consisting of DNA/RNA hybrids and a displaced strand of DNA that occur during transcription, and prevents their accumulation, thereby maintaining genome stability. Also participates in pre-mRNA splicing, translational regulation and snoRNA processing, which is essential for ribosome biogenesis. The chain is Probable ATP-dependent RNA helicase DDX41 (DDX41) from Homo sapiens (Human).